Consider the following 403-residue polypeptide: F-box/kelch-repeat protein At5g39560 (403 aa).

The F-box domain maps to 26-72 (PPSLMSLPYEIIENILARISKWSYPNLSLVSKSFLSLLSSPQLYKTR). Kelch repeat units follow at residues 138 to 182 (EIYV…LIDQ), 184 to 229 (IYVL…VWPN), 248 to 294 (NPNA…IENV), and 296 to 340 (YACH…VNYG).

The polypeptide is F-box/kelch-repeat protein At5g39560 (Arabidopsis thaliana (Mouse-ear cress)).